A 381-amino-acid polypeptide reads, in one-letter code: ELMO domain-containing protein 3 (381 aa).

Residues 1 to 31 (MNEKSCSFHSKEELRDGQGERLSAGYSPSYD) form a disordered region. The segment covering 9-19 (HSKEELRDGQG) has biased composition (basic and acidic residues). An ELMO domain is found at 170 to 324 (VHGRVLQTIY…ELEVLAKKSP (155 aa)).

As to expression, both isoform 1 and isoform 6 are widely expressed.

Its subcellular location is the cell projection. The protein localises to the stereocilium. It localises to the kinocilium. It is found in the cytoplasm. The protein resides in the cytoskeleton. Functionally, acts as a GTPase-activating protein (GAP) for ARL2 with low specific activity. This is ELMO domain-containing protein 3 (ELMOD3) from Homo sapiens (Human).